Consider the following 244-residue polypeptide: tRNA (guanine-N(1)-)-methyltransferase (244 aa).

S-adenosyl-L-methionine contacts are provided by residues glycine 113 and 133 to 138; that span reads IGDFVL.

Belongs to the RNA methyltransferase TrmD family. Homodimer.

The protein localises to the cytoplasm. It carries out the reaction guanosine(37) in tRNA + S-adenosyl-L-methionine = N(1)-methylguanosine(37) in tRNA + S-adenosyl-L-homocysteine + H(+). Specifically methylates guanosine-37 in various tRNAs. In Bacillus pumilus (strain SAFR-032), this protein is tRNA (guanine-N(1)-)-methyltransferase.